The sequence spans 266 residues: 3-methyl-2-oxobutanoate hydroxymethyltransferase (266 aa).

Aspartate 45 and aspartate 84 together coordinate Mg(2+). Residues 45-46, aspartate 84, and lysine 112 each bind 3-methyl-2-oxobutanoate; that span reads DS. Glutamate 114 serves as a coordination point for Mg(2+). Glutamate 181 functions as the Proton acceptor in the catalytic mechanism.

The protein belongs to the PanB family. In terms of assembly, homodecamer; pentamer of dimers. Requires Mg(2+) as cofactor.

It localises to the cytoplasm. The catalysed reaction is 3-methyl-2-oxobutanoate + (6R)-5,10-methylene-5,6,7,8-tetrahydrofolate + H2O = 2-dehydropantoate + (6S)-5,6,7,8-tetrahydrofolate. It participates in cofactor biosynthesis; (R)-pantothenate biosynthesis; (R)-pantoate from 3-methyl-2-oxobutanoate: step 1/2. Catalyzes the reversible reaction in which hydroxymethyl group from 5,10-methylenetetrahydrofolate is transferred onto alpha-ketoisovalerate to form ketopantoate. In Pseudomonas syringae pv. syringae (strain B728a), this protein is 3-methyl-2-oxobutanoate hydroxymethyltransferase.